A 274-amino-acid chain; its full sequence is Nitrogenase iron protein (274 aa).

8–15 lines the ATP pocket; that stretch reads GKGGIGKS. C94 is a [4Fe-4S] cluster binding site. An ADP-ribosylarginine; by dinitrogenase reductase ADP-ribosyltransferase modification is found at R97. C131 is a binding site for [4Fe-4S] cluster.

It belongs to the NifH/BchL/ChlL family. As to quaternary structure, homodimer. The cofactor is [4Fe-4S] cluster. The reversible ADP-ribosylation of Arg-97 inactivates the nitrogenase reductase and regulates nitrogenase activity.

It catalyses the reaction N2 + 8 reduced [2Fe-2S]-[ferredoxin] + 16 ATP + 16 H2O = H2 + 8 oxidized [2Fe-2S]-[ferredoxin] + 2 NH4(+) + 16 ADP + 16 phosphate + 6 H(+). Its function is as follows. The key enzymatic reactions in nitrogen fixation are catalyzed by the nitrogenase complex, which has 2 components: the iron protein and the molybdenum-iron protein. This Solidesulfovibrio magneticus (strain ATCC 700980 / DSM 13731 / RS-1) (Desulfovibrio magneticus) protein is Nitrogenase iron protein.